A 492-amino-acid chain; its full sequence is ATP synthase subunit beta, chloroplastic (492 aa).

170 to 177 lines the ATP pocket; the sequence is GGAGVGKT.

The protein belongs to the ATPase alpha/beta chains family. As to quaternary structure, F-type ATPases have 2 components, CF(1) - the catalytic core - and CF(0) - the membrane proton channel. CF(1) has five subunits: alpha(3), beta(3), gamma(1), delta(1), epsilon(1). CF(0) has four main subunits: a(1), b(1), b'(1) and c(9-12).

The protein localises to the plastid. Its subcellular location is the chloroplast thylakoid membrane. The enzyme catalyses ATP + H2O + 4 H(+)(in) = ADP + phosphate + 5 H(+)(out). In terms of biological role, produces ATP from ADP in the presence of a proton gradient across the membrane. The catalytic sites are hosted primarily by the beta subunits. The polypeptide is ATP synthase subunit beta, chloroplastic (Marchantia polymorpha (Common liverwort)).